The sequence spans 349 residues: DNA polymerase IV (349 aa).

Residues 4-185 enclose the UmuC domain; sequence IIHIDCDCFY…LPVAKLHGVG (182 aa). Positions 8 and 103 each coordinate Mg(2+). Residue Glu-104 is part of the active site.

It belongs to the DNA polymerase type-Y family. Monomer. The cofactor is Mg(2+).

Its subcellular location is the cytoplasm. The enzyme catalyses DNA(n) + a 2'-deoxyribonucleoside 5'-triphosphate = DNA(n+1) + diphosphate. Functionally, poorly processive, error-prone DNA polymerase involved in untargeted mutagenesis. Copies undamaged DNA at stalled replication forks, which arise in vivo from mismatched or misaligned primer ends. These misaligned primers can be extended by PolIV. Exhibits no 3'-5' exonuclease (proofreading) activity. May be involved in translesional synthesis, in conjunction with the beta clamp from PolIII. The protein is DNA polymerase IV of Pseudomonas aeruginosa (strain UCBPP-PA14).